The chain runs to 320 residues: Glutathione synthetase (320 aa).

The ATP-grasp domain occupies 130 to 315 (KIFISWFSRF…ITGILIDYIE (186 aa)). Position 156–212 (156–212 (WKEKNDIILKPLDAMGGKGVFRIKKDDPNFSVIVETLTNYEKKYCMIQTYLPEVQFG)) interacts with ATP. The Mg(2+) site is built by glutamate 286 and asparagine 288.

The protein belongs to the prokaryotic GSH synthase family. Requires Mg(2+) as cofactor. Mn(2+) is required as a cofactor.

It carries out the reaction gamma-L-glutamyl-L-cysteine + glycine + ATP = glutathione + ADP + phosphate + H(+). Its pathway is sulfur metabolism; glutathione biosynthesis; glutathione from L-cysteine and L-glutamate: step 2/2. The chain is Glutathione synthetase from Buchnera aphidicola subsp. Schizaphis graminum (strain Sg).